We begin with the raw amino-acid sequence, 444 residues long: Type I restriction enzyme EcoDI specificity subunit (444 aa).

This sequence belongs to the type-I restriction system S methylase family. In terms of assembly, the type I restriction/modification system is composed of three polypeptides R, M and S; the restriction enzyme has stoichiometry R(2)M(2)S(1) while the methyltransferase is M(2)S(1).

In terms of biological role, the specificity (S) subunit of a type I restriction enzyme; this subunit dictates DNA sequence specificity. The M and S subunits together form a methyltransferase (MTase) that methylates two adenine residues of the sequence 5'-TTAN(7)GTCY-3'. In the presence of the R subunit the complex can also act as an endonuclease, binding to the same target sequence but cutting the DNA some distance from this site. Whether the DNA is cut or modified depends on the methylation state of the target sequence. When the target site is unmodified, the DNA is cut. When the target site is hemimethylated, the complex acts as a maintenance MTase modifying the DNA so that both strands become methylated. After locating a non-methylated recognition site, the enzyme complex serves as a molecular motor that translocates DNA in an ATP-dependent manner until a collision occurs that triggers cleavage. This chain is Type I restriction enzyme EcoDI specificity subunit, found in Escherichia coli.